The following is a 558-amino-acid chain: Formate--tetrahydrofolate ligase (558 aa).

65–72 (TPAGEGKT) contributes to the ATP binding site.

This sequence belongs to the formate--tetrahydrofolate ligase family.

The catalysed reaction is (6S)-5,6,7,8-tetrahydrofolate + formate + ATP = (6R)-10-formyltetrahydrofolate + ADP + phosphate. It functions in the pathway one-carbon metabolism; tetrahydrofolate interconversion. This Methylobacterium nodulans (strain LMG 21967 / CNCM I-2342 / ORS 2060) protein is Formate--tetrahydrofolate ligase.